The chain runs to 400 residues: Enoyl-[acyl-carrier-protein] reductase [NADH] (400 aa).

Residues 48–53, 74–75, 111–112, and 139–140 contribute to the NAD(+) site; these read GSSSGY, FE, DA, and LA. Residue tyrosine 225 coordinates substrate. The active-site Proton donor is tyrosine 235. NAD(+) contacts are provided by residues lysine 244 and 273 to 275; that span reads VVT.

This sequence belongs to the TER reductase family. Monomer.

It catalyses the reaction a 2,3-saturated acyl-[ACP] + NAD(+) = a (2E)-enoyl-[ACP] + NADH + H(+). It participates in lipid metabolism; fatty acid biosynthesis. In terms of biological role, involved in the final reduction of the elongation cycle of fatty acid synthesis (FAS II). Catalyzes the reduction of a carbon-carbon double bond in an enoyl moiety that is covalently linked to an acyl carrier protein (ACP). In Shewanella pealeana (strain ATCC 700345 / ANG-SQ1), this protein is Enoyl-[acyl-carrier-protein] reductase [NADH].